A 440-amino-acid polypeptide reads, in one-letter code: Dihydrolipoyllysine-residue acetyltransferase component of pyruvate dehydrogenase complex (440 aa).

The 77-residue stretch at 2–78 folds into the Lipoyl-binding domain; it reads SIEVKMPALS…AVGQVIAVMA (77 aa). Lysine 43 is subject to N6-lipoyllysine. The segment at 91 to 113 is disordered; sequence ASSQISEPSEKADVAQKETADSE. A compositionally biased stretch (basic and acidic residues) spans 98–110; that stretch reads PSEKADVAQKETA. Positions 149–186 constitute a Peripheral subunit-binding (PSBD) domain; that stretch reads KASPLAKRLAKKNHVDLKQVNGSGPHGRIIKADIEAFI. Polar residues predominate over residues 192–202; the sequence is ASSNPSVSTPE. The segment at 192-214 is disordered; sequence ASSNPSVSTPEASGKITHDTPHN. Histidine 412 is an active-site residue.

The protein belongs to the 2-oxoacid dehydrogenase family. Forms a 24-polypeptide structural core with octahedral symmetry. It depends on (R)-lipoate as a cofactor.

The enzyme catalyses N(6)-[(R)-dihydrolipoyl]-L-lysyl-[protein] + acetyl-CoA = N(6)-[(R)-S(8)-acetyldihydrolipoyl]-L-lysyl-[protein] + CoA. Functionally, the pyruvate dehydrogenase complex catalyzes the overall conversion of pyruvate to acetyl-CoA and CO(2). It contains multiple copies of three enzymatic components: pyruvate dehydrogenase (E1), dihydrolipoamide acetyltransferase (E2) and lipoamide dehydrogenase (E3). The chain is Dihydrolipoyllysine-residue acetyltransferase component of pyruvate dehydrogenase complex (pdhC) from Zymomonas mobilis subsp. mobilis (strain ATCC 31821 / ZM4 / CP4).